Reading from the N-terminus, the 421-residue chain is Testin (421 aa).

Residues 92–199 enclose the PET domain; that stretch reads MILTNPVAAK…GDVKLPCEMD (108 aa). The segment at 133-164 is disordered; that stretch reads EKQPVAGSEGAQYRKKQLAKQLPAHDQDPSKC. Residues 155-164 are compositionally biased toward basic and acidic residues; sequence PAHDQDPSKC. LIM zinc-binding domains follow at residues 234 to 297, 299 to 359, and 362 to 421; these read YSCY…CDSE, PRCA…NHAV, and QGCH…KRMS.

The protein belongs to the prickle / espinas / testin family. In terms of assembly, interacts via LIM domain 1 with ZYX. Interacts (via LIM domain 3) with ENAH and VASP. Interacts with ALKBH4, talin, actin, alpha-actinin, GRIP1 and PXN. Interacts (via LIM domain 2) with ACTL7A (via N-terminus). Heterodimer with ACTL7A; the heterodimer interacts with ENAH to form a heterotrimer.

It is found in the cytoplasm. The protein localises to the cell junction. The protein resides in the focal adhesion. Functionally, scaffold protein that may play a role in cell adhesion, cell spreading and in the reorganization of the actin cytoskeleton. Plays a role in the regulation of cell proliferation. May act as a tumor suppressor. This chain is Testin (TES), found in Pan troglodytes (Chimpanzee).